A 276-amino-acid polypeptide reads, in one-letter code: Pantothenate synthetase (276 aa).

An ATP-binding site is contributed by 25 to 32 (MGYLHRGH). The active-site Proton donor is His32. Residue Gln56 coordinates (R)-pantoate. Gln56 lines the beta-alanine pocket. Residue 143–146 (GEKD) participates in ATP binding. Gln149 is a (R)-pantoate binding site. Residues Val172 and 180-183 (LSSR) each bind ATP.

It belongs to the pantothenate synthetase family. As to quaternary structure, homodimer.

The protein resides in the cytoplasm. The enzyme catalyses (R)-pantoate + beta-alanine + ATP = (R)-pantothenate + AMP + diphosphate + H(+). It participates in cofactor biosynthesis; (R)-pantothenate biosynthesis; (R)-pantothenate from (R)-pantoate and beta-alanine: step 1/1. Functionally, catalyzes the condensation of pantoate with beta-alanine in an ATP-dependent reaction via a pantoyl-adenylate intermediate. This chain is Pantothenate synthetase, found in Thermus thermophilus (strain ATCC BAA-163 / DSM 7039 / HB27).